The sequence spans 249 residues: ATP synthase subunit a, chloroplastic (249 aa).

The next 5 helical transmembrane spans lie at 40 to 60 (QVLI…VLAV), 97 to 117 (VPFI…GALL), 136 to 156 (INTT…AGLS), 201 to 221 (LVVV…VMFL), and 222 to 242 (GLFT…AYIG).

This sequence belongs to the ATPase A chain family. F-type ATPases have 2 components, CF(1) - the catalytic core - and CF(0) - the membrane proton channel. CF(1) has five subunits: alpha(3), beta(3), gamma(1), delta(1), epsilon(1). CF(0) has four main subunits: a, b, b' and c.

It localises to the plastid. The protein localises to the chloroplast thylakoid membrane. Key component of the proton channel; it plays a direct role in the translocation of protons across the membrane. The chain is ATP synthase subunit a, chloroplastic from Draba nemorosa (Woodland whitlowgrass).